The following is a 108-amino-acid chain: Phosphoribosyl-ATP pyrophosphatase (108 aa).

The protein belongs to the PRA-PH family.

It is found in the cytoplasm. The enzyme catalyses 1-(5-phospho-beta-D-ribosyl)-ATP + H2O = 1-(5-phospho-beta-D-ribosyl)-5'-AMP + diphosphate + H(+). Its pathway is amino-acid biosynthesis; L-histidine biosynthesis; L-histidine from 5-phospho-alpha-D-ribose 1-diphosphate: step 2/9. This is Phosphoribosyl-ATP pyrophosphatase from Aromatoleum aromaticum (strain DSM 19018 / LMG 30748 / EbN1) (Azoarcus sp. (strain EbN1)).